Consider the following 246-residue polypeptide: Protein phosphatase PhpP (246 aa).

A PPM-type phosphatase domain is found at 2–240 (EISLLTDVGQ…DNITVALVSM (239 aa)). Residues aspartate 36, glycine 37, aspartate 192, and aspartate 231 each contribute to the Mn(2+) site.

Belongs to the PP2C family. As to quaternary structure, interacts with the kinase domain of StkP. Mn(2+) is required as a cofactor.

The protein resides in the cytoplasm. It catalyses the reaction O-phospho-L-seryl-[protein] + H2O = L-seryl-[protein] + phosphate. The catalysed reaction is O-phospho-L-threonyl-[protein] + H2O = L-threonyl-[protein] + phosphate. Phosphatase activity is inhibited by NaF but not by okadaic acid. In terms of biological role, protein phosphatase able to dephosphorylate StkP-P and a phosphothreonine residue in a phosphopeptide synthetic substrate. PhpP and its cognate protein kinase StkP appear to constitute a functional signaling couple in vivo, PhpP's primary role probably being to control phosphorylation levels of StkP and of its targets (which include LocZ, DivIVA and KhpB (also called EloR/Jag)). PhpP thus performs an essential control of StkP activity. Overexpression confers an stkP deletion-like phenotype. This is Protein phosphatase PhpP (phpP) from Streptococcus pneumoniae.